Consider the following 175-residue polypeptide: Endoribonuclease YbeY (175 aa).

Residues histidine 129, histidine 133, and histidine 139 each contribute to the Zn(2+) site.

This sequence belongs to the endoribonuclease YbeY family. The cofactor is Zn(2+).

It localises to the cytoplasm. Functionally, single strand-specific metallo-endoribonuclease involved in late-stage 70S ribosome quality control and in maturation of the 3' terminus of the 16S rRNA. In Lactobacillus gasseri (strain ATCC 33323 / DSM 20243 / BCRC 14619 / CIP 102991 / JCM 1131 / KCTC 3163 / NCIMB 11718 / NCTC 13722 / AM63), this protein is Endoribonuclease YbeY.